The chain runs to 614 residues: Acetylcholinesterase (614 aa).

The first 31 residues, 1 to 31 (MRPPWYPLHTPSLASPLLFLLLSLLGGGARA), serve as a signal peptide directing secretion. The cysteines at positions 100 and 127 are disulfide-linked. S234 functions as the Acyl-ester intermediate in the catalytic mechanism. C288 and C303 are joined by a disulfide. An N-linked (GlcNAc...) asparagine glycan is attached at N296. E365 serves as the catalytic Charge relay system. N381 carries N-linked (GlcNAc...) asparagine glycosylation. The cysteines at positions 440 and 560 are disulfide-linked. The active-site Charge relay system is H478. An N-linked (GlcNAc...) asparagine glycan is attached at N495.

This sequence belongs to the type-B carboxylesterase/lipase family. Homotetramer; composed of disulfide-linked homodimers. Catalytic forms H (GPI-anchor dimer) and T (asymmetric collagen-tailed), which differ in their C-terminus, account for all types of known ACHE forms. Interacts with PRIMA1. The interaction with PRIMA1 is required to anchor it to the basal lamina of cells and organize into tetramers. Has been found in central nervous system and muscle. Found in embryonic liver and spleen but not in adult liver.

The protein resides in the synapse. The protein localises to the secreted. Its subcellular location is the cell membrane. The catalysed reaction is acetylcholine + H2O = choline + acetate + H(+). Functionally, terminates signal transduction at the neuromuscular junction by rapid hydrolysis of the acetylcholine released into the synaptic cleft. In Rattus norvegicus (Rat), this protein is Acetylcholinesterase (Ache).